The primary structure comprises 118 residues: Non-specific lipid-transfer protein 2 (118 aa).

The signal sequence occupies residues 1–25; it reads MARGMKLACVVLVICMVVIAPMAEG. Cystine bridges form between C29/C76, C39/C53, C54/C99, and C74/C113.

Belongs to the plant LTP family.

Its function is as follows. Plant non-specific lipid-transfer proteins transfer phospholipids as well as galactolipids across membranes. May play a role in wax or cutin deposition in the cell walls of expanding epidermal cells and certain secretory tissues. Binds saturated fatty acids, jasmonic acid and, with highest efficiency, unsaturated fatty acids and lysolipids. In Lens culinaris (Lentil), this protein is Non-specific lipid-transfer protein 2.